The primary structure comprises 147 residues: uncharacterized protein (147 aa).

In terms of domain architecture, HTH LytTR-type spans 44-147; that stretch reads LVGYIDKEIH…LKSIKERLSI (104 aa).

It localises to the cytoplasm. This is an uncharacterized protein from Staphylococcus aureus (strain MRSA252).